Reading from the N-terminus, the 391-residue chain is Phosphopentomutase (391 aa).

Mn(2+) contacts are provided by aspartate 12, aspartate 285, histidine 290, aspartate 326, histidine 327, and histidine 338.

The protein belongs to the phosphopentomutase family. It depends on Mn(2+) as a cofactor.

The protein resides in the cytoplasm. The enzyme catalyses 2-deoxy-alpha-D-ribose 1-phosphate = 2-deoxy-D-ribose 5-phosphate. It carries out the reaction alpha-D-ribose 1-phosphate = D-ribose 5-phosphate. Its pathway is carbohydrate degradation; 2-deoxy-D-ribose 1-phosphate degradation; D-glyceraldehyde 3-phosphate and acetaldehyde from 2-deoxy-alpha-D-ribose 1-phosphate: step 1/2. In terms of biological role, isomerase that catalyzes the conversion of deoxy-ribose 1-phosphate (dRib-1-P) and ribose 1-phosphate (Rib-1-P) to deoxy-ribose 5-phosphate (dRib-5-P) and ribose 5-phosphate (Rib-5-P), respectively. The protein is Phosphopentomutase of Herpetosiphon aurantiacus (strain ATCC 23779 / DSM 785 / 114-95).